A 411-amino-acid polypeptide reads, in one-letter code: Imidazolonepropionase (411 aa).

Residues His-75 and His-77 each coordinate Fe(3+). 2 residues coordinate Zn(2+): His-75 and His-77. 4-imidazolone-5-propanoate is bound by residues Arg-84, Tyr-147, and His-180. Tyr-147 is an N-formimidoyl-L-glutamate binding site. His-245 contributes to the Fe(3+) binding site. Residue His-245 participates in Zn(2+) binding. A 4-imidazolone-5-propanoate-binding site is contributed by Gln-248. Asp-320 is a Fe(3+) binding site. A Zn(2+)-binding site is contributed by Asp-320. Asn-322 and Gly-324 together coordinate N-formimidoyl-L-glutamate. Thr-325 is a 4-imidazolone-5-propanoate binding site.

This sequence belongs to the metallo-dependent hydrolases superfamily. HutI family. Requires Zn(2+) as cofactor. Fe(3+) is required as a cofactor.

It is found in the cytoplasm. It carries out the reaction 4-imidazolone-5-propanoate + H2O = N-formimidoyl-L-glutamate. It participates in amino-acid degradation; L-histidine degradation into L-glutamate; N-formimidoyl-L-glutamate from L-histidine: step 3/3. In terms of biological role, catalyzes the hydrolytic cleavage of the carbon-nitrogen bond in imidazolone-5-propanoate to yield N-formimidoyl-L-glutamate. It is the third step in the universal histidine degradation pathway. This chain is Imidazolonepropionase, found in Photobacterium profundum (strain SS9).